Reading from the N-terminus, the 273-residue chain is 3-((Z)-2-isocyanoethenyl)-1H-indole synthase (273 aa).

Fe cation contacts are provided by His105, Asp107, and His254.

It belongs to the TfdA dioxygenase family. The cofactor is Fe(2+).

It carries out the reaction (2S)-3-(1H-indol-3-yl)-2-isocyanopropanoate + 2-oxoglutarate + O2 + H(+) = 3-[(Z)-2-isocyanoethenyl]-1H-indole + succinate + 2 CO2 + H2O. In terms of biological role, involved in the biosynthesis of ambiguines, a family of hapalindole-type alkaloids. Responsible for the synthesis of Z-3-(2-isocyanoethen)-indole, a biosynthetic precursor to all ambiguines. The sequence is that of 3-((Z)-2-isocyanoethenyl)-1H-indole synthase from Fischerella ambigua (strain UTEX 1903).